A 442-amino-acid chain; its full sequence is Hydrolase phmG (442 aa).

Serine 259 serves as the catalytic Nucleophile.

The protein belongs to the AB hydrolase superfamily. FUS2 hydrolase family. Homodimer.

The protein operates within mycotoxin biosynthesis. In terms of biological role, hydrolyase; part of the gene cluster that mediates the biosynthesis of the mycotoxins phomacins, leucine-derived cytochalasans with potent actin polymerization-inhibitory activities and monocot-specific antigerminative activities. The first step in the pathway is catalyzed by the hybrid PKS-NRPS phmA, assisted by the enoyl reductase phmE, that are responsible for fusion of the leucine precursor and the polyketide backbone to produce a 2-pyrrolidone intermediate. The polyketide synthase module (PKS) of phmA is responsible for the synthesis of the polyketide backbone and the downstream nonribosomal peptide synthetase (NRPS) amidates the carboxyl end of the polyketide with the leucine precursor. Because phmA lacks a designated enoylreductase (ER) domain, the required activity is provided the enoyl reductase phmE. Reduction by the hydrolyase phmG, followed by dehydration and intra-molecular Diels-Alder cyclization by the Diels-Alderase phmD then yield the required isoindolone-fused macrocycle. A number of oxidative steps catalyzed by the tailoring cytochrome P450 monooxygenase phmB, the FAD-linked oxidoreductase phmC and the short-chain dehydrogenase/reductase phmF, are further required to afford the final products, phomacin D and phomacin E. The polypeptide is Hydrolase phmG (Phaeosphaeria nodorum (strain SN15 / ATCC MYA-4574 / FGSC 10173) (Glume blotch fungus)).